An 874-amino-acid polypeptide reads, in one-letter code: DNA mismatch repair protein MutS (874 aa).

Residue 630 to 637 (GPNMAGKS) participates in ATP binding.

Belongs to the DNA mismatch repair MutS family.

In terms of biological role, this protein is involved in the repair of mismatches in DNA. It is possible that it carries out the mismatch recognition step. This protein has a weak ATPase activity. This is DNA mismatch repair protein MutS from Chlorobium phaeovibrioides (strain DSM 265 / 1930) (Prosthecochloris vibrioformis (strain DSM 265)).